We begin with the raw amino-acid sequence, 294 residues long: uncharacterized protein (294 aa).

Active-site charge relay system residues include threonine 43 and tyrosine 104. The Proton donor role is filled by tyrosine 130. Lysine 158 (schiff-base intermediate with substrate) is an active-site residue.

The protein belongs to the DapA family. In terms of assembly, homotetramer.

It is found in the cytoplasm. This is an uncharacterized protein from Pyrococcus abyssi (strain GE5 / Orsay).